A 382-amino-acid chain; its full sequence is Dihydroflavonol 4-reductase (382 aa).

NADP(+) is bound by residues Lys44 and Tyr163.

This sequence belongs to the NAD(P)-dependent epimerase/dehydratase family. Dihydroflavonol-4-reductase subfamily.

It catalyses the reaction a (2R,3S,4S)-leucoanthocyanidin + NADP(+) = a (2R,3R)-dihydroflavonol + NADPH + H(+). The enzyme catalyses (2S)-flavan-4-ol + NADP(+) = (2S)-flavanone + NADPH + H(+). The protein operates within pigment biosynthesis; anthocyanin biosynthesis. Functionally, bifunctional enzyme involved in flavonoid metabolism. The chain is Dihydroflavonol 4-reductase (DFRA) from Arabidopsis thaliana (Mouse-ear cress).